A 356-amino-acid chain; its full sequence is UDP-3-O-acylglucosamine N-acyltransferase (356 aa).

His-242 serves as the catalytic Proton acceptor.

Belongs to the transferase hexapeptide repeat family. LpxD subfamily. As to quaternary structure, homotrimer.

The enzyme catalyses a UDP-3-O-[(3R)-3-hydroxyacyl]-alpha-D-glucosamine + a (3R)-hydroxyacyl-[ACP] = a UDP-2-N,3-O-bis[(3R)-3-hydroxyacyl]-alpha-D-glucosamine + holo-[ACP] + H(+). It participates in bacterial outer membrane biogenesis; LPS lipid A biosynthesis. Functionally, catalyzes the N-acylation of UDP-3-O-acylglucosamine using 3-hydroxyacyl-ACP as the acyl donor. Is involved in the biosynthesis of lipid A, a phosphorylated glycolipid that anchors the lipopolysaccharide to the outer membrane of the cell. This chain is UDP-3-O-acylglucosamine N-acyltransferase, found in Acinetobacter baylyi (strain ATCC 33305 / BD413 / ADP1).